Reading from the N-terminus, the 315-residue chain is Gamma-hemolysin component C (315 aa).

An N-terminal signal peptide occupies residues Met-1–Ala-29.

The protein belongs to the aerolysin family. As to quaternary structure, toxicity requires sequential binding and synergistic association of a class S and a class F component which form heterooligomeric complexes. HlgC (class S) associates with HlgB (class F) thus forming an CB toxin.

Its function is as follows. Toxin that seems to act by forming pores in the membrane of the cell. Has a hemolytic and a leucotoxic activity. The protein is Gamma-hemolysin component C (hlgC) of Staphylococcus aureus (strain Mu50 / ATCC 700699).